Reading from the N-terminus, the 310-residue chain is Nucleotide-binding protein MAP_1147 (310 aa).

ATP is bound at residue 30 to 37 (GLSGAGRG). A GTP-binding site is contributed by 81 to 84 (DVRS).

Belongs to the RapZ-like family.

Functionally, displays ATPase and GTPase activities. The chain is Nucleotide-binding protein MAP_1147 from Mycolicibacterium paratuberculosis (strain ATCC BAA-968 / K-10) (Mycobacterium paratuberculosis).